The sequence spans 620 residues: Sodium-dependent dopamine transporter (620 aa).

The Cytoplasmic segment spans residues 1–56 (MSKSKCSVGLMSSVVAPAKEPNAVGPKEVELILVKEQNGVQLTSSTLTNPRQSPVE). The discontinuously helical transmembrane segment at 57–95 (AQDRETWGKKIDFLLSVIGFAVDLANVWRFPYLCYKNGG) threads the bilayer. 5 residues coordinate Na(+): G75, A77, V78, D79, and N82. D79 serves as a coordination point for dopamine. 2 helical membrane passes run 96–127 (GAFL…NREG) and 128–171 (AAGV…FSSF). 2 residues coordinate dopamine: S149 and G153. The Extracellular portion of the chain corresponds to 172–236 (TTELPWIHCN…SHGIDDLGPP (65 aa)). An intrachain disulfide couples C180 to C189. N-linked (GlcNAc...) asparagine glycosylation is found at N181, N188, and N205. 2 consecutive transmembrane segments (helical) span residues 237 to 256 (RWQL…FSLW) and 257 to 287 (KGVK…GVTL). Over 288–306 (PGAIDGIRAYLSVDFYRLC) the chain is Extracellular. A discontinuously helical membrane pass occupies residues 307-335 (EASVWIDAATQVCFSLGVGFGVLIAFSSY). A chloride-binding site is contributed by Q317. Position 320 (F320) interacts with dopamine. Residues S321 and N353 each coordinate Na(+). S321 provides a ligand contact to chloride. The chain crosses the membrane as a helical span at residues 336 to 376 (NKFTNNCYRDAIVTTSINSLTSFSSGFVVFSFLGYMAQKHS). A chloride-binding site is contributed by S357. The Extracellular portion of the chain corresponds to 377–400 (VPIGDVAKDGPGLIFIIYPEAIAT). Helical transmembrane passes span 401–442 (LPLS…QLLH), 443–466 (RHRE…CVTN), and 467–499 (GGIY…AWFY). Positions 418, 421, and 422 each coordinate Na(+). Residues S422 and A423 each coordinate dopamine. Topologically, residues 500–516 (GVGQFSDDIQQMTGQRP) are cytoplasmic. Residues 517–542 (SLYWRLCWKLVSPCFLLFVVVVSIVT) traverse the membrane as a helical segment. Over 543–553 (FRPPHYGAYIF) the chain is Extracellular. A helical membrane pass occupies residues 554–583 (PDWANALGWVIATSSMAMVPIYAAYKFCSL). Residues 561–590 (GWVIATSSMAMVPIYAAYKFCSLPGSFREK) are interaction with TGFB1I1. The Cytoplasmic segment spans residues 584 to 620 (PGSFREKLAYAIAPEKDRELVDRGEVRQFTLRHWLKV).

The protein belongs to the sodium:neurotransmitter symporter (SNF) (TC 2.A.22) family. SLC6A3 subfamily. In terms of assembly, monomer. Homooligomer; disulfide-linked. Interacts with PRKCABP and TGFB1I1. Interacts (via N-terminus) with SYNGR3 (via N-terminus). Interacts with SLC18A2. Interacts with TOR1A (ATP-bound); TOR1A regulates SLC6A3 subcellular location. Interacts with alpha-synuclein/SNCA. Interacts with SEPTIN4. In terms of tissue distribution, highly expressed in substantia nigra. Expressed in axonal varicosities in dopaminergic nerve terminals (at protein level). Expressed in the striatum (at protein level).

The protein localises to the cell membrane. It is found in the cell projection. The protein resides in the neuron projection. It localises to the axon. It carries out the reaction dopamine(out) + chloride(out) + Na(+)(out) = dopamine(in) + chloride(in) + Na(+)(in). The enzyme catalyses dopamine(out) + chloride(out) + 2 Na(+)(out) = dopamine(in) + chloride(in) + 2 Na(+)(in). It catalyses the reaction (R)-noradrenaline(out) + chloride(out) + Na(+)(out) = (R)-noradrenaline(in) + chloride(in) + Na(+)(in). Its activity is regulated as follows. Inhibited by cocaine, which occupies the same binding site as dopamine. Inhibited by zinc ions. Enhanced by the antibiotic valinomycin. Inhibited by benztropine. Inhibited by GBR 12909 dihydrochloride and amphetamine. Inhibited by mazindol, GBR 12783 dihydrochloride, nomifensine, diclofensine, amfonelic acid, Lu 19005, Win-35428, bupropion and ritalin. Mediates sodium- and chloride-dependent transport of dopamine. Also mediates sodium- and chloride-dependent transport of norepinephrine (also known as noradrenaline). Regulator of light-dependent retinal hyaloid vessel regression, downstream of OPN5 signaling. This is Sodium-dependent dopamine transporter (SLC6A3) from Homo sapiens (Human).